The chain runs to 506 residues: Histidine ammonia-lyase (506 aa).

Residues 143–145 (ASG) constitute a cross-link (5-imidazolinone (Ala-Gly)). S144 carries the 2,3-didehydroalanine (Ser) modification.

This sequence belongs to the PAL/histidase family. Contains an active site 4-methylidene-imidazol-5-one (MIO), which is formed autocatalytically by cyclization and dehydration of residues Ala-Ser-Gly.

It is found in the cytoplasm. It catalyses the reaction L-histidine = trans-urocanate + NH4(+). It functions in the pathway amino-acid degradation; L-histidine degradation into L-glutamate; N-formimidoyl-L-glutamate from L-histidine: step 1/3. In Salmonella paratyphi B (strain ATCC BAA-1250 / SPB7), this protein is Histidine ammonia-lyase.